A 344-amino-acid chain; its full sequence is Heat-inducible transcription repressor HrcA (344 aa).

The protein belongs to the HrcA family.

In terms of biological role, negative regulator of class I heat shock genes (grpE-dnaK-dnaJ and groELS operons). Prevents heat-shock induction of these operons. The chain is Heat-inducible transcription repressor HrcA from Moorella thermoacetica (strain ATCC 39073 / JCM 9320).